Consider the following 451-residue polypeptide: Uronate isomerase (451 aa).

The protein belongs to the metallo-dependent hydrolases superfamily. Uronate isomerase family.

It catalyses the reaction D-glucuronate = D-fructuronate. The catalysed reaction is aldehydo-D-galacturonate = keto-D-tagaturonate. It participates in carbohydrate metabolism; pentose and glucuronate interconversion. The sequence is that of Uronate isomerase from Thermotoga neapolitana (strain ATCC 49049 / DSM 4359 / NBRC 107923 / NS-E).